Reading from the N-terminus, the 429-residue chain is MKKKPFYKVLYVQVIFAIVVGVILGHYYPSLATEMKPLGDGFIKLIKMVIGPIIFCTVVTGIAGMEDMKKVGRVGGKALLYFEIVSTFALVLGLAATHILRPGVGFNIDPATLDGKAVASYAAKAHGQSTVDFLMHIIPNTMVDAFAQGEILQILLIALLFGSVLAHLGERGKVVTDFIDGLTRVLFGIVHIVTKLAPIGAFGAMAFTIGKYGVGSLVPLLKLIGTFYLTSVVFVLVVLGAIARFTGFSIIRFVSYIKEELLIVLGTSSSEAALPQLMEKLEKAGCSRSVVGLVVPTGYSFNLDGTNIYMTMAVLFIAQATNIELTWMQQLTLLAVAMLTSKGASGVTGAGFITLAATLAVVPTIPLSGMVLILGIDRFMSECRALTNIVGNGVATVVVSAWEKELDRAKLRQALKGGGEVAATETAGV.

The next 8 membrane-spanning stretches (helical) occupy residues 9-29 (VLYV…HYYP), 45-65 (LIKM…IAGM), 79-99 (LLYF…ATHI), 149-169 (GEIL…AHLG), 185-205 (VLFG…FGAM), 223-243 (LIGT…GAIA), 308-328 (IYMT…LTWM), and 356-376 (AATL…ILGI).

The protein belongs to the dicarboxylate/amino acid:cation symporter (DAACS) (TC 2.A.23) family.

It is found in the cell inner membrane. In terms of biological role, responsible for the transport of dicarboxylates such as succinate, fumarate, and malate from the periplasm across the membrane. The protein is C4-dicarboxylate transport protein of Burkholderia multivorans (strain ATCC 17616 / 249).